A 644-amino-acid polypeptide reads, in one-letter code: Tripeptidyl-peptidase sed1 (644 aa).

A signal peptide spans 1-18; sequence MRLSHVLLGTAAAAGVLA. The propeptide at 19-196 is removed in mature form; the sequence is SPTPNDYVVH…KARSIEKRSF (178 aa). The Peptidase S53 domain occupies 224–643; sequence AITPLCISAL…PALLDLFMSL (420 aa). The N-linked (GlcNAc...) asparagine glycan is linked to asparagine 235. Catalysis depends on charge relay system residues glutamate 300 and aspartate 304. N-linked (GlcNAc...) asparagine glycans are attached at residues asparagine 326, asparagine 332, and asparagine 519. Serine 561 functions as the Charge relay system in the catalytic mechanism. Residues aspartate 602, isoleucine 603, glycine 621, and aspartate 623 each contribute to the Ca(2+) site.

The cofactor is Ca(2+). In terms of processing, N-glycosylated.

It is found in the secreted. It localises to the extracellular space. It carries out the reaction Release of an N-terminal tripeptide from a polypeptide.. Secreted tripeptidyl-peptidase which degrades proteins at acidic pHs and is involved in virulence. This chain is Tripeptidyl-peptidase sed1 (sed1), found in Aspergillus fumigatus (strain ATCC MYA-4609 / CBS 101355 / FGSC A1100 / Af293) (Neosartorya fumigata).